Here is a 477-residue protein sequence, read N- to C-terminus: MTDRYDAVLVGAGIMGATLAALLHELDPAMRLLMLERLDGPALESSAAANNAGTGHAANCELNYTPQQADGSVATAKALAINAAFERSLEFWATLRERGELDTPAFLNSVPHISFVWGQGDVAFLRQRHQQLSALPAFAGMEWSSDPAELAEWMPLVMQGRGASEPVAATRISRGTDVDFGSLTRLYLQDLQRSGALELRTGCEVNDLTRKSNGDWSVELAGGERVQTPFVFLGAGGGALPLLQRSTIPEAKAFAGFPVSGQWLVCGDNQLASRHLAKVYGKAKVGAPPMSVPHLDTRFINGERSLLFGPFAGFSTKFLKQGSLLDLPRSVRIGNLLPMLQVGAGNFPLVQYLINQLRQSPEQRLEALQQFLPQAEASDWTLSVAGQRVQIIKNGPKGGQLQLGTEVVAAADGSLAALLGASPGASTAVTTMLEVLERCFASRLATPAWQERLKALFPSWGGDVLSSRSRNTAVLGL.

The protein belongs to the MQO family. FAD is required as a cofactor.

The catalysed reaction is (S)-malate + a quinone = a quinol + oxaloacetate. It participates in carbohydrate metabolism; tricarboxylic acid cycle; oxaloacetate from (S)-malate (quinone route): step 1/1. The chain is Probable malate:quinone oxidoreductase from Synechococcus sp. (strain RCC307).